A 476-amino-acid chain; its full sequence is MLSIDHVDWLELIRVTLHPLAKFPGPKLAGASYCYEFWYEVICGIQYTQKIIKLHEQYGPIVRINPDELHFNDVDFVDVVYTAGARKRDKSSHYLAGFGGVSKSTFGTLDHMHHRTRRRALNKFFSKSRVLQIEDSIHEKSQQLCDKFLAYRDQGPFDLTGAFSCIATDTVTEYCFGSSPGFLNQDGWEPNCKSYFETIERMAHVTRHVPWILYLAKWLPLSIIRLVSSDLNSFLVDTRVKKPERLKRVVLDAERHDAKDCPVFLELLNSDLPPREKSKQRFMYEANGATLAGSGSTAIAMSNIVYNLVANPRIGHKLRSELLGKVSDPKNLPRWSSLEELPYLTAVIHEGLRSMYDPSKERLPYDPSQERLPRIATEEELIYKDGSTPGKSKYVIPRGYAIGTSAHVVHSDESIFPNASQFNPERWLGRDGQRNRELERHLLSFSKGSRYCLGMHCRCTTCLALPASVRNGTRGY.

C452 lines the heme pocket.

The protein belongs to the cytochrome P450 family. Heme serves as cofactor.

The protein operates within secondary metabolite biosynthesis. In terms of biological role, cytochrome P450 monooxygenase; part of the gene cluster that mediates the biosynthesis of pyrrolopyrazines, secondary metabolites showing insecticidal activity. The role of ppzE within the pathway has still to be determined. The single multifunctional NRPS ppzA is sufficient to produce peramine via condensation of 1-pyrroline-5-carboxylate and arginine, N-methylation of the alpha-amino group of arginine and reduction of the thioester and the cyclization to form an iminium ion resulting in release from the peptide synthetase. Deprotonation of this intermediate and oxidation of the pyrroline ring would give rise to peramine. In Epichloe species that produce only peramine, the peramine synthetase gene is not localized in a gene cluster, in contrast to Metarhizium species that contain additional pyrrolopyrazine biosynthesis genes. The 2-oxoglutarate-Fe(II) type oxidoreductase ppzC hydroxylates peramine to yield the newly identified compound 8-hydroxyperamine whereas ppzD converts L-proline into trans-4-hydroxy-L-proline, a precursor of peramine biosynthesis. The sequence is that of Cytochrome P450 monooxygenase ppzE from Metarhizium majus (strain ARSEF 297).